The primary structure comprises 282 residues: Ribonuclease 3 (282 aa).

The region spanning 18–141 (FVAFFKSLNI…LVAAIYEDLG (124 aa)) is the RNase III domain. Glutamate 59 is a binding site for Mg(2+). Aspartate 63 is a catalytic residue. Residues aspartate 127 and glutamate 130 each contribute to the Mg(2+) site. Glutamate 130 is an active-site residue.

It belongs to the ribonuclease III family. In terms of assembly, homodimer. Requires Mg(2+) as cofactor.

The protein localises to the cytoplasm. The catalysed reaction is Endonucleolytic cleavage to 5'-phosphomonoester.. In terms of biological role, digests double-stranded RNA. Involved in the processing of primary rRNA transcript to yield the immediate precursors to the large and small rRNAs (23S and 16S). Processes some mRNAs, and tRNAs when they are encoded in the rRNA operon. Processes pre-crRNA and tracrRNA of type II CRISPR loci if present in the organism. The chain is Ribonuclease 3 from Mycoplasmoides pneumoniae (strain ATCC 15531 / DSM 23978 / CIP 103766 / NBRC 14401 / NCTC 10119 / FH) (Mycoplasma pneumoniae).